The primary structure comprises 240 residues: 7-cyano-7-deazaguanine synthase (240 aa).

Residue Phe18–Leu28 participates in ATP binding. Positions 197, 206, 209, and 212 each coordinate Zn(2+).

The protein belongs to the QueC family. It depends on Zn(2+) as a cofactor.

The enzyme catalyses 7-carboxy-7-deazaguanine + NH4(+) + ATP = 7-cyano-7-deazaguanine + ADP + phosphate + H2O + H(+). Its pathway is purine metabolism; 7-cyano-7-deazaguanine biosynthesis. Functionally, catalyzes the ATP-dependent conversion of 7-carboxy-7-deazaguanine (CDG) to 7-cyano-7-deazaguanine (preQ(0)). This chain is 7-cyano-7-deazaguanine synthase, found in Shewanella baltica (strain OS223).